A 263-amino-acid polypeptide reads, in one-letter code: MSGEQTPMCSMDLREIKGKETNMADSYHGMSWYEQYIQPCVVELLGSALFIFIGCLSVIENSPNTGLLQPALAHGLALGLIIATLGNISGGHFNPAVSLAVTLVGGLKTMLLIPYWVSQLFGGMIGAALAKVVSPEERFWNASGAAFAIVQEQEQVAEALGVEIVMTMLLVLAVCMGAVNEKTMGPLAPFSIGFSVIVDILAGGGISGACMNPARAFGPAVMAGYWDFHWIYWLGPLLAGLFVGLLIRLFIGDEKTRLILKSR.

Residues 1-38 (MSGEQTPMCSMDLREIKGKETNMADSYHGMSWYEQYIQ) are Cytoplasmic-facing. Residues 39 to 59 (PCVVELLGSALFIFIGCLSVI) form a helical membrane-spanning segment. Cys55 bears the Cysteine persulfide mark. Cys55 bears the Cysteine sulfenic acid (-SOH) mark. Residues 60 to 86 (ENSPNTGLLQPALAHGLALGLIIATLG) are Extracellular-facing. Residues 87–107 (NISGGHFNPAVSLAVTLVGGL) traverse the membrane as a helical segment. The NPA 1 motif lies at 94 to 96 (NPA). The Cytoplasmic portion of the chain corresponds to 108-109 (KT). A helical membrane pass occupies residues 110 to 130 (MLLIPYWVSQLFGGMIGAALA). The Extracellular portion of the chain corresponds to 131–158 (KVVSPEERFWNASGAAFAIVQEQEQVAE). The N-linked (GlcNAc...) asparagine glycan is linked to Asn141. The helical transmembrane segment at 159 to 179 (ALGVEIVMTMLLVLAVCMGAV) threads the bilayer. The Cytoplasmic segment spans residues 180–185 (NEKTMG). A helical membrane pass occupies residues 186–206 (PLAPFSIGFSVIVDILAGGGI). Over 207–230 (SGACMNPARAFGPAVMAGYWDFHW) the chain is Extracellular. The NPA 2 signature appears at 212–214 (NPA). Residues 231–251 (IYWLGPLLAGLFVGLLIRLFI) form a helical membrane-spanning segment. The Cytoplasmic segment spans residues 252–263 (GDEKTRLILKSR).

This sequence belongs to the MIP/aquaporin (TC 1.A.8) family. Post-translationally, N-glycosylated. Sulfenylation at Cys-55(C55-SOH) when hydrogen peroxide flows through the AQP8 channel, making it susceptible to hydrogen sulfide produced by CBS. In terms of processing, persulfidation at Cys-55 is required to gate AQP8 channel; under stress condition, hydrogen peroxide accumulates in the cell leading to CBS activation that produces hydrogen sulfide inducing persulfidation of oxidized Cys-55 (C55-SOH). In terms of tissue distribution, highly expressed in sperm, pancreas and liver. Expressed in hepatocytes, acinal cells of pancreas and salivary gland, and absorptive colonic epithelial cells. Expressed in the myoepithelium of submandibular and parotid glands. Expressed in pancreatic beta-cells. Expressed in testis but not in epididymis. Expressed in small intestine.

The protein resides in the cell membrane. Its subcellular location is the mitochondrion inner membrane. It is found in the apical cell membrane. It localises to the basolateral cell membrane. The protein localises to the smooth endoplasmic reticulum membrane. The enzyme catalyses H2O(in) = H2O(out). The catalysed reaction is NH4(+)(in) = NH4(+)(out). It carries out the reaction H2O2(out) = H2O2(in). It catalyses the reaction formamide(out) = formamide(in). The enzyme catalyses methylamine(out) = methylamine(in). With respect to regulation, reversibly gated by a two-step sulfenylation-persulfidation process in cells undergoing diverse stresses. In terms of biological role, channel that allows the facilitated permeation of water and uncharged molecules, such as hydrogen peroxide and the neutral form of ammonia (NH3), through cellular membranes such as plasma membrane, inner mitochondrial membrane and endoplasmic reticulum membrane of several tissues. The transport of ammonia neutral form induces a parallel transport of proton, at alkaline pH when the concentration of ammonia is high. However, it is unclear whether the transport of proton takes place via the aquaporin or via an endogenous pathway. Also, may transport ammonia analogs such as formamide and methylamine, a transport favourited at basic pH due to the increase of unprotonated (neutral) form, which is expected to favor diffusion. Does not transport urea or glycerol. The water transport mechanism is mercury- and copper-sensitive and passive in response to osmotic driving forces. At the canicular plasma membrane, mediates the osmotic transport of water toward the bile canaliculus and facilitates the cAMP-induced bile canalicular water secretion, a process involved in bile formation. In addition, mediates the hydrogen peroxide release from hepatocyte mitochondria that modulates the SREBF2-mediated cholesterol synthesis and facilitates the mitochondrial ammonia uptake which is metabolized into urea, mainly under glucagon stimulation. In B cells, transports the CYBB-generated hydrogen peroxide from the external leaflet of the plasma membrane to the cytosol to promote B cell activation and differentiation for signal amplification. In the small intestine and colon system, mediates water transport through mitochondria and apical membrane of epithelial cells. May play an important role in the adaptive response of proximal tubule cells to acidosis possibly facilitating mitochondrial ammonia transport. This Rattus norvegicus (Rat) protein is Aquaporin-8.